The sequence spans 472 residues: GTPase HflX (472 aa).

Residues 1 to 21 form a disordered region; sequence MDTIDTPGEQGSQSFGNSLGA. The Hflx-type G domain maps to 230 to 396; the sequence is PTFALIGYTN…LMTEIIQEKS (167 aa). GTP is bound by residues 236-243, 261-265, 283-286, 349-352, and 374-376; these read GYTNSGKS, FATLD, DTVG, NKVD, and SAK. 2 residues coordinate Mg(2+): Ser243 and Thr263.

It belongs to the TRAFAC class OBG-HflX-like GTPase superfamily. HflX GTPase family. Monomer. Associates with the 50S ribosomal subunit. Requires Mg(2+) as cofactor.

The protein resides in the cytoplasm. In terms of biological role, GTPase that associates with the 50S ribosomal subunit and may have a role during protein synthesis or ribosome biogenesis. Specific for GTP. This Chlamydia pneumoniae (Chlamydophila pneumoniae) protein is GTPase HflX.